A 1076-amino-acid chain; its full sequence is DNA-directed RNA polymerase subunit beta (1076 aa).

The protein belongs to the RNA polymerase beta chain family. In plastids the minimal PEP RNA polymerase catalytic core is composed of four subunits: alpha, beta, beta', and beta''. When a (nuclear-encoded) sigma factor is associated with the core the holoenzyme is formed, which can initiate transcription.

The protein resides in the plastid. It localises to the chloroplast. The catalysed reaction is RNA(n) + a ribonucleoside 5'-triphosphate = RNA(n+1) + diphosphate. In terms of biological role, DNA-dependent RNA polymerase catalyzes the transcription of DNA into RNA using the four ribonucleoside triphosphates as substrates. The protein is DNA-directed RNA polymerase subunit beta of Hordeum vulgare (Barley).